Here is a 162-residue protein sequence, read N- to C-terminus: UPF0254 protein MTH1148 homolog (162 aa).

The protein belongs to the UPF0254 family.

This is UPF0254 protein MTH1148 homolog from Methanothermobacter thermautotrophicus (strain Winter) (Methanobacterium thermoautotrophicum).